Reading from the N-terminus, the 100-residue chain is uncharacterized protein (100 aa).

A helical transmembrane segment spans residues 28-45 (VFLVFYIITMVKIYIFLI).

It is found in the membrane. This is an uncharacterized protein from Saccharomyces cerevisiae (strain ATCC 204508 / S288c) (Baker's yeast).